Consider the following 355-residue polypeptide: 3-isopropylmalate dehydrogenase (355 aa).

Positions 90, 100, 128, and 222 each coordinate substrate. Positions 222, 246, and 250 each coordinate Mg(2+). An NAD(+)-binding site is contributed by 280 to 292; that stretch reads GSAPDIAGKGIAN.

It belongs to the isocitrate and isopropylmalate dehydrogenases family. LeuB type 1 subfamily. In terms of assembly, homodimer. The cofactor is Mg(2+). Requires Mn(2+) as cofactor.

The protein resides in the cytoplasm. It catalyses the reaction (2R,3S)-3-isopropylmalate + NAD(+) = 4-methyl-2-oxopentanoate + CO2 + NADH. It participates in amino-acid biosynthesis; L-leucine biosynthesis; L-leucine from 3-methyl-2-oxobutanoate: step 3/4. Its function is as follows. Catalyzes the oxidation of 3-carboxy-2-hydroxy-4-methylpentanoate (3-isopropylmalate) to 3-carboxy-4-methyl-2-oxopentanoate. The product decarboxylates to 4-methyl-2 oxopentanoate. The sequence is that of 3-isopropylmalate dehydrogenase from Burkholderia mallei (strain ATCC 23344).